The sequence spans 37 residues: Large ribosomal subunit protein bL36 (37 aa).

This sequence belongs to the bacterial ribosomal protein bL36 family.

This Halothermothrix orenii (strain H 168 / OCM 544 / DSM 9562) protein is Large ribosomal subunit protein bL36.